We begin with the raw amino-acid sequence, 421 residues long: Testin (421 aa).

In terms of domain architecture, PET spans 92–199 (MILTNPVAAK…GDVKLPCEMD (108 aa)). Positions 133–164 (EKQPVAGSEGAQYRKKQLAKQLPAHDQDPSKC) are disordered. A compositionally biased stretch (basic and acidic residues) spans 155-164 (PAHDQDPSKC). LIM zinc-binding domains follow at residues 234–297 (YSCY…CDSE), 299–359 (PRCA…NHAV), and 362–421 (QGCH…KMMS).

The protein belongs to the prickle / espinas / testin family. As to quaternary structure, interacts via LIM domain 1 with ZYX. Interacts (via LIM domain 3) with ENAH and VASP. Interacts with ALKBH4, talin, actin, alpha-actinin, GRIP1 and PXN. Interacts (via LIM domain 2) with ACTL7A (via N-terminus). Heterodimer with ACTL7A; the heterodimer interacts with ENAH to form a heterotrimer.

It is found in the cytoplasm. It localises to the cell junction. Its subcellular location is the focal adhesion. Scaffold protein that may play a role in cell adhesion, cell spreading and in the reorganization of the actin cytoskeleton. Plays a role in the regulation of cell proliferation. May act as a tumor suppressor. This is Testin (TES) from Aotus nancymaae (Ma's night monkey).